The following is a 419-amino-acid chain: L-rhamnose isomerase (419 aa).

The Mn(2+) site is built by His262, Asp294, and Asp296.

It belongs to the rhamnose isomerase family. In terms of assembly, homotetramer. Mn(2+) is required as a cofactor.

Its subcellular location is the cytoplasm. The catalysed reaction is L-rhamnopyranose = L-rhamnulose. It functions in the pathway carbohydrate degradation; L-rhamnose degradation; glycerone phosphate from L-rhamnose: step 1/3. Catalyzes the interconversion of L-rhamnose and L-rhamnulose. The sequence is that of L-rhamnose isomerase from Salmonella gallinarum (strain 287/91 / NCTC 13346).